We begin with the raw amino-acid sequence, 221 residues long: Uridylate kinase (221 aa).

7 to 11 (KISGK) serves as a coordination point for ATP. Residue glycine 43 participates in UMP binding. Glycine 44 and arginine 48 together coordinate ATP. UMP is bound by residues aspartate 62 and 109-115 (LQPGQST). Residues threonine 135 and tyrosine 141 each coordinate ATP.

Belongs to the UMP kinase family. As to quaternary structure, homohexamer.

It is found in the cytoplasm. The enzyme catalyses UMP + ATP = UDP + ADP. The protein operates within pyrimidine metabolism; CTP biosynthesis via de novo pathway; UDP from UMP (UMPK route): step 1/1. Its activity is regulated as follows. Inhibited by UTP. Catalyzes the reversible phosphorylation of UMP to UDP. This chain is Uridylate kinase, found in Ignicoccus hospitalis (strain KIN4/I / DSM 18386 / JCM 14125).